Reading from the N-terminus, the 77-residue chain is Small ribosomal subunit protein bS18 (77 aa).

The protein belongs to the bacterial ribosomal protein bS18 family. Part of the 30S ribosomal subunit. Forms a tight heterodimer with protein bS6.

In terms of biological role, binds as a heterodimer with protein bS6 to the central domain of the 16S rRNA, where it helps stabilize the platform of the 30S subunit. This is Small ribosomal subunit protein bS18 from Desulforamulus reducens (strain ATCC BAA-1160 / DSM 100696 / MI-1) (Desulfotomaculum reducens).